The chain runs to 242 residues: Ubiquinone biosynthesis O-methyltransferase (242 aa).

S-adenosyl-L-methionine is bound by residues arginine 44, glycine 64, aspartate 85, and methionine 129.

It belongs to the methyltransferase superfamily. UbiG/COQ3 family.

It carries out the reaction a 3-demethylubiquinol + S-adenosyl-L-methionine = a ubiquinol + S-adenosyl-L-homocysteine + H(+). The enzyme catalyses a 3-(all-trans-polyprenyl)benzene-1,2-diol + S-adenosyl-L-methionine = a 2-methoxy-6-(all-trans-polyprenyl)phenol + S-adenosyl-L-homocysteine + H(+). It functions in the pathway cofactor biosynthesis; ubiquinone biosynthesis. Its function is as follows. O-methyltransferase that catalyzes the 2 O-methylation steps in the ubiquinone biosynthetic pathway. The polypeptide is Ubiquinone biosynthesis O-methyltransferase (Salmonella typhi).